A 151-amino-acid polypeptide reads, in one-letter code: Transcriptional regulator MraZ (151 aa).

SpoVT-AbrB domains lie at 5–52 (ANAI…PLPE) and 81–124 (AVDL…DEDA).

Belongs to the MraZ family. Forms oligomers.

The protein resides in the cytoplasm. Its subcellular location is the nucleoid. The protein is Transcriptional regulator MraZ of Pseudomonas aeruginosa (strain LESB58).